Reading from the N-terminus, the 215-residue chain is Nascent polypeptide-associated complex subunit alpha (215 aa).

The disordered stretch occupies residues 1-81; it reads MPGEATETVP…SEKKARKAMS (81 aa). Polar residues predominate over residues 9-28; it reads VPATEQELPQPQAETGSGTE. A compositionally biased stretch (acidic residues) spans 29–42; that stretch reads SDSDESVPELEEQD. Serine 43 is subject to Phosphoserine; by ILK1. A compositionally biased stretch (low complexity) spans 44–57; the sequence is TQATTQQAQLAAAA. Residues 69–80 are required for DNA-binding; sequence QSRSEKKARKAM. The NAC-A/B domain maps to 70–135; that stretch reads SRSEKKARKA…AKIEDLSQQA (66 aa). Residues 93–108 form an RNA/DNA-binding region; that stretch reads RVTIRKSKNILFVITK. Serine 132 bears the Phosphoserine mark. Residue lysine 142 is modified to N6-acetyllysine; alternate. A Glycyl lysine isopeptide (Lys-Gly) (interchain with G-Cter in SUMO2); alternate cross-link involves residue lysine 142. Threonine 159 is subject to Phosphothreonine; by GSK3-beta. Residue threonine 161 is modified to Phosphothreonine. Phosphoserine occurs at positions 166, 186, 191, and 203. A UBA domain is found at 176-213; that stretch reads VEVKDIELVMSQANVSRAKAVRALKNNSNDIVNAIMEL.

Belongs to the NAC-alpha family. In terms of assembly, interacts with TBP and JUN. Part of the nascent polypeptide-associated complex (NAC), which is a heterodimer of NACA and BTF3 (via NAC-A/B domains). NAC associates with ribosomes through the BTF3/NACB subunit and contacts the ribosomal protein L23, which is positioned near the exiting site. Both subunits can contact nascent polypeptide chains. NACA may also form homodimers, and only this form binds DNA. In terms of processing, phosphorylation of Thr-159 by GSK3B may promote proteasome mediated degradation. Phosphorylation of Ser-43 by ILK during cell adhesion may promote nuclear localization. Ubiquitously expressed.

The protein localises to the cytoplasm. Its subcellular location is the nucleus. In terms of biological role, prevents inappropriate targeting of non-secretory polypeptides to the endoplasmic reticulum (ER). Binds to nascent polypeptide chains as they emerge from the ribosome and blocks their interaction with the signal recognition particle (SRP), which normally targets nascent secretory peptides to the ER. Also reduces the inherent affinity of ribosomes for protein translocation sites in the ER membrane (M sites). May act as a specific coactivator for JUN, binding to DNA and stabilizing the interaction of JUN homodimers with target gene promoters. The protein is Nascent polypeptide-associated complex subunit alpha (NACA) of Homo sapiens (Human).